We begin with the raw amino-acid sequence, 265 residues long: Insulin-like growth factor-binding protein 2-B (265 aa).

Positions 1–17 (MSLALLCSLLLVHGSLG) are cleaved as a signal peptide. The IGFBP N-terminal domain occupies 19 to 99 (IVFRCPSCTA…IQGLGRCENK (81 aa)). 6 cysteine pairs are disulfide-bonded: cysteine 23–cysteine 49, cysteine 26–cysteine 51, cysteine 34–cysteine 52, cysteine 41–cysteine 55, cysteine 63–cysteine 76, and cysteine 70–cysteine 96. A compositionally biased stretch (polar residues) spans 107 to 122 (TNQESAAHSGEVNGTR). 2 disordered regions span residues 107–128 (TNQESAAHSGEVNGTRSPPMKK) and 144–170 (HHNNKRTRMYNTQDDPKTPHPKQSQCQ). One can recognise a Thyroglobulin type-1 domain in the interval 166–248 (QSQCQQELDK…SDKVRGDPNC (83 aa)). 3 cysteine pairs are disulfide-bonded: cysteine 169/cysteine 203, cysteine 214/cysteine 225, and cysteine 227/cysteine 248. Positions 238-265 (SSDKVRGDPNCSQYYGGPELEPPTAQQK) are disordered. The Cell attachment site motif lies at 243–245 (RGD).

As to quaternary structure, interacts with igf2. Interacts with igf1. As to expression, in early embryos, expressed at a low level in most tissues with expression becoming abundant in the liver by 96 hours post-fertilization (hpf). The expression pattern in adults exhibits sexual dimorphism; in adult males expression is limited exclusively to the liver whereas in adult females expression is observed in the liver and other tissues including the gut, kidney, ovary and muscle.

The protein localises to the secreted. Functionally, IGF-binding proteins prolong the half-life of the IGFs and have been shown to either inhibit or stimulate the growth promoting effects of the IGFs on cell culture. They alter the interaction of IGFs with their cell surface receptors. The chain is Insulin-like growth factor-binding protein 2-B from Danio rerio (Zebrafish).